Here is a 351-residue protein sequence, read N- to C-terminus: Sulfate/thiosulfate import ATP-binding protein CysA (351 aa).

The region spanning 3–237 is the ABC transporter domain; that stretch reads ITVRNLHKRF…PRSAFVYEFL (235 aa). 35–42 serves as a coordination point for ATP; the sequence is GPSGCGKT.

This sequence belongs to the ABC transporter superfamily. Sulfate/tungstate importer (TC 3.A.1.6) family. In terms of assembly, the complex is composed of two ATP-binding proteins (CysA), two transmembrane proteins (CysT and CysW) and a solute-binding protein (CysP).

The protein localises to the cell inner membrane. It catalyses the reaction sulfate(out) + ATP + H2O = sulfate(in) + ADP + phosphate + H(+). It carries out the reaction thiosulfate(out) + ATP + H2O = thiosulfate(in) + ADP + phosphate + H(+). Part of the ABC transporter complex CysAWTP involved in sulfate/thiosulfate import. Responsible for energy coupling to the transport system. The polypeptide is Sulfate/thiosulfate import ATP-binding protein CysA (Burkholderia mallei (strain ATCC 23344)).